A 111-amino-acid chain; its full sequence is Probable 4-amino-4-deoxy-L-arabinose-phosphoundecaprenol flippase subunit ArnE (111 aa).

Topologically, residues 1 to 37 (MIWLTLVFASLLSVAGQLCQKQATCFVAINKRRKHIA) are cytoplasmic. The helical transmembrane segment at 38–58 (LWLGLALACLGLAMVLWLLVL) threads the bilayer. The EamA domain occupies 40 to 109 (LGLALACLGL…IIGGIVILGS (70 aa)). The Periplasmic segment spans residues 59 to 60 (QN). Residues 61–81 (VPVGIAYPMLSLNFVWVTLAA) traverse the membrane as a helical segment. The Cytoplasmic segment spans residues 82–87 (VKLWHE). Residues 88–108 (PVSPRHWCGVAFIIGGIVILG) traverse the membrane as a helical segment. Residues 109–111 (STV) are Periplasmic-facing.

This sequence belongs to the ArnE family. In terms of assembly, heterodimer of ArnE and ArnF.

It localises to the cell inner membrane. Its pathway is bacterial outer membrane biogenesis; lipopolysaccharide biosynthesis. Translocates 4-amino-4-deoxy-L-arabinose-phosphoundecaprenol (alpha-L-Ara4N-phosphoundecaprenol) from the cytoplasmic to the periplasmic side of the inner membrane. This chain is Probable 4-amino-4-deoxy-L-arabinose-phosphoundecaprenol flippase subunit ArnE, found in Escherichia coli (strain 55989 / EAEC).